Reading from the N-terminus, the 306-residue chain is Glutaminase (306 aa).

Residues serine 64, asparagine 115, glutamate 159, asparagine 166, tyrosine 190, tyrosine 242, and valine 260 each contribute to the substrate site.

Belongs to the glutaminase family. As to quaternary structure, homotetramer.

It catalyses the reaction L-glutamine + H2O = L-glutamate + NH4(+). This chain is Glutaminase, found in Vibrio parahaemolyticus serotype O3:K6 (strain RIMD 2210633).